Reading from the N-terminus, the 155-residue chain is Ribosome maturation factor RimP (155 aa).

It belongs to the RimP family.

It localises to the cytoplasm. Required for maturation of 30S ribosomal subunits. The protein is Ribosome maturation factor RimP of Dichelobacter nodosus (strain VCS1703A).